The following is a 343-amino-acid chain: MMFLLPFLTVFLAKQSHTRTHSLRYFRLAISDPGPGVPEFISVGYVDSHPITTYDSVTRQKEPRAPWMAENLAPDHWERYTQLLRGWQRTFQTELRHLQRHYNHSGLHTYQRMIGCELLEDGSTTGFLQYAYDGQDFIVFDKDTLSWLAMDNVAHITKRAWEANLHELQYQKNWLEEECIAWLKRFLEYGSDALERTEHPVVRTTRKETFPGITTLFCRAHGFYPPEISMIWKKNGEEIVQEVDYGGVLPSGDGTYQMWVSVDLDPQTKDIYSCHVEHCGLQMVLEAPQESGNTLLVANTISGTIILIIVLAGVGALIWRRRSREPKEVMYQPTQVNEGSSPS.

A signal peptide spans 1-18; sequence MMFLLPFLTVFLAKQSHT. An alpha-1 region spans residues 19–105; sequence RTHSLRYFRL…RHLQRHYNHS (87 aa). The tract at residues 19 to 197 is antigen-binding cleft; it reads RTHSLRYFRL…EYGSDALERT (179 aa). The Extracellular segment spans residues 19-298; that stretch reads RTHSLRYFRL…QESGNTLLVA (280 aa). 8-(9H-purin-6-yl)-2-oxa-8-azabicyclo[3.3.1]nona-3,6-diene-4,6-dicarbaldehyde contacts are provided by Tyr-25 and Arg-27. The 5-(2-oxoethylideneamino)-6-(D-ribitylamino)uracil site is built by Arg-27, Ser-42, and Lys-61. Residues Arg-27, Ser-42, and Lys-61 each coordinate 5-(2-oxopropylideneamino)-6-(D-ribitylamino)uracil. Positions 27, 42, and 61 each coordinate 7-hydroxy-6-methyl-8-(1-D-ribityl)lumazine. Lys-61 and His-76 together coordinate 8-(9H-purin-6-yl)-2-oxa-8-azabicyclo[3.3.1]nona-3,6-diene-4,6-dicarbaldehyde. Lys-61 contributes to the 2-amino-4-oxopteridine-6-carbaldehyde binding site. Position 61 (Lys-61) interacts with pyridoxal. Residue Asn-103 is glycosylated (N-linked (GlcNAc...) asparagine). Residues 106 to 197 are alpha-2; it reads GLHTYQRMIG…EYGSDALERT (92 aa). Arg-112 contacts 8-(9H-purin-6-yl)-2-oxa-8-azabicyclo[3.3.1]nona-3,6-diene-4,6-dicarbaldehyde. Arg-112, Tyr-170, and Gln-171 together coordinate 5-(2-oxoethylideneamino)-6-(D-ribitylamino)uracil. The 5-(2-oxopropylideneamino)-6-(D-ribitylamino)uracil site is built by Arg-112, Tyr-170, and Gln-171. Residues Arg-112, Tyr-170, and Gln-171 each coordinate 7-hydroxy-6-methyl-8-(1-D-ribityl)lumazine. 2 disulfides stabilise this stretch: Cys-116-Cys-179 and Cys-218-Cys-274. The segment at 198–289 is alpha-3; it reads EHPVVRTTRK…GLQMVLEAPQ (92 aa). Positions 200–302 constitute an Ig-like C1-type domain; it reads PVVRTTRKET…NTLLVANTIS (103 aa). Positions 290 to 298 are connecting peptide; sequence ESGNTLLVA. A helical transmembrane segment spans residues 299–319; sequence NTISGTIILIIVLAGVGALIW. Topologically, residues 320–343 are cytoplasmic; the sequence is RRRSREPKEVMYQPTQVNEGSSPS.

Heterotrimer that consists of MR1, B2M and metabolite antigen. Major classes of metabolite ligands presented by MR1 include riboflavin-related antigens, pyrimidines and ribityl lumazines, nucleobase adducts and folate derivatives. Forms reversible covalent Schiff base complexes with microbial pyrimidine-based metabolite, which serves as a molecular switch triggering complete folding, stable association with B2M and translocation of the ternary complex from endoplasmic reticulum to the plasma membrane. Alternatively, forms non-Schiff base complexes with ribityl lumazines. On antigen-presenting cells, the ternary complex interacts with TCR on MR1-restricted T cells. Interacts with TAPBP and TAPBPL chaperones in the endoplasmic reticulum. TAPBP associated or not with MHC class I peptide loading complex binds ligand-free MR1 or MR1-B2M complex, providing for stable MR1 pools ready for metabolite antigen processing. TAPBPL interacts with MR1 in a ligand-independent way; this interaction may stabilize MR1 pool and facilitate ligand loading and dissociation. Structurally, MR1-B2M heterodimer adopts a topology similar to classical MHC class I molecules, with alpha-1 and alpha-2 domains of MR1 forming the antigen-binding cleft composed of two alpha-helices resting on a floor of 7-stranded anti-parallel beta-pleated sheet. MR1-B2M heterodimer (via alpha-helices) interacts with TCR (via CDR domains). In terms of processing, N-glycosylated. Expressed in kidney, liver, testis, spleen, thymus, brain, and heart.

It localises to the cell membrane. The protein localises to the endoplasmic reticulum membrane. The protein resides in the golgi apparatus membrane. Its subcellular location is the early endosome membrane. It is found in the late endosome membrane. In terms of biological role, antigen-presenting molecule specialized in displaying microbial pyrimidine-based metabolites to alpha-beta T cell receptors (TCR) on innate-type mucosal-associated invariant T (MAIT) cells. In complex with B2M preferentially presents riboflavin-derived metabolites to semi-invariant TCRs on MAIT cells, guiding immune surveillance of the microbial metabolome at mucosal epithelial barriers. Signature pyrimidine-based microbial antigens are generated via non-enzymatic condensation of metabolite intermediates of the riboflavin pathway with by-products arising from other metabolic pathways such as glycolysis. Typical potent antigenic metabolites are 5-(2-oxoethylideneamino)-6-D-ribitylaminouracil (5-OE-RU) and 5-(2-oxopropylideneamino)-6-D-ribitylaminouracil (5-OP-RU), products of condensation of 5-amino-6-D-ribityaminouracil (5-A-RU) with glyoxal or methylglyoxal by-products, respectively. May present microbial antigens to various MAIT cell subsets, providing for unique recognition of diverse microbes, including pathogens that do not synthesize riboflavin. Upon antigen recognition, elicits rapid innate-type MAIT cell activation to eliminate pathogenic microbes by directly killing infected cells. During T cell development, drives thymic selection and post-thymic terminal differentiation of MAIT cells in a process dependent on commensal microflora. Acts as an immune sensor of cancer cell metabolome. May present a tumor-specific or -associated metabolite essential for cancer cell survival to a pan-cancer TCR on a non-MAIT CD8-positive T cell clone, triggering T cell-mediated killing of a wide range of cancer cell types. May present tumor-enriched pyridoxal and pyridoxal 5'-phosphate antigens, enabling preferential recognition of cancer cells. Presents nucleobase carbonyl adducts generated during oxidative stress. Captures M3Ade, a nucleobase adduct composed of one adenine modified by a malondialdehyde trimer, for recognition by MR1-restricted T cell clones expressing a polyclonal TCR repertoire. The protein is Major histocompatibility complex class I-related protein 1 of Rattus norvegicus (Rat).